The sequence spans 195 residues: Thymidine kinase (195 aa).

ATP is bound by residues 15 to 22 (GPMYSGKS), glutamate 23, 57 to 58 (SH), and 88 to 91 (DEVQ). Catalysis depends on glutamate 89, which acts as the Proton acceptor. Substrate is bound at residue phenylalanine 120. Zn(2+) contacts are provided by cysteine 145 and cysteine 148. Tyrosine 179 is a binding site for substrate. Zn(2+) contacts are provided by cysteine 183 and cysteine 186.

The protein belongs to the thymidine kinase family.

Its subcellular location is the cytoplasm. The enzyme catalyses thymidine + ATP = dTMP + ADP + H(+). The chain is Thymidine kinase from Clostridium acetobutylicum (strain ATCC 824 / DSM 792 / JCM 1419 / IAM 19013 / LMG 5710 / NBRC 13948 / NRRL B-527 / VKM B-1787 / 2291 / W).